Here is a 165-residue protein sequence, read N- to C-terminus: MAVVEIEEIPALLQSGQTIAGLDLGTKTIGLAVSDLGLSFAHPRPVIKRVKFSIDAQVLLKALDADKVGVIVIGLPMNMDGTSGPRVQATRAFVRTMQPLTDLPFVFWDERLSTVAAERALIGMDVSRGKRADRIDSAAASFILQGALDRLHSIRRSASDDYDAG.

Belongs to the YqgF nuclease family.

The protein resides in the cytoplasm. Its function is as follows. Could be a nuclease involved in processing of the 5'-end of pre-16S rRNA. This is Putative pre-16S rRNA nuclease from Brucella anthropi (strain ATCC 49188 / DSM 6882 / CCUG 24695 / JCM 21032 / LMG 3331 / NBRC 15819 / NCTC 12168 / Alc 37) (Ochrobactrum anthropi).